Here is a 274-residue protein sequence, read N- to C-terminus: MIMKVHQVQEKKMNKTYYLISSLAPKSESLKPLIKKELNKKLVEVDDPTVADYLFINGGDGTFIKNAIKYDRAGLKIIGINGGSLGFYTTFNETNIDQIANNLDQLKYTQLDFIRLQIDDQIHHALNEFNINSTTAYGYDIFIDNEFYQKFRGTGLLISTTTGSTGINKSANGAILFPRIKAIQMVELYPLLHSSFTTIQSPIILPIDTKIRIEIKENYCDHDACPRIVADGAVIRQGLSSTTIEISATRSQADYVATTDLRSYIQRLQKTFIY.

The active-site Proton acceptor is aspartate 60. Residues 60–61 (DG), lysine 65, 127–128 (NE), and arginine 152 each bind NAD(+).

This sequence belongs to the NAD kinase family. A divalent metal cation is required as a cofactor.

It is found in the cytoplasm. It catalyses the reaction NAD(+) + ATP = ADP + NADP(+) + H(+). In terms of biological role, involved in the regulation of the intracellular balance of NAD and NADP, and is a key enzyme in the biosynthesis of NADP. Catalyzes specifically the phosphorylation on 2'-hydroxyl of the adenosine moiety of NAD to yield NADP. The protein is NAD kinase of Mycoplasmoides gallisepticum (strain R(low / passage 15 / clone 2)) (Mycoplasma gallisepticum).